The sequence spans 97 residues: uncharacterized protein (97 aa).

This sequence to M.thermoautotrophicum MTH1236.

This is an uncharacterized protein from Methanocaldococcus jannaschii (strain ATCC 43067 / DSM 2661 / JAL-1 / JCM 10045 / NBRC 100440) (Methanococcus jannaschii).